The primary structure comprises 506 residues: Sucrose transport protein SUT3 (506 aa).

At 1 to 20 the chain is on the cytoplasmic side; that stretch reads MAVDMELDGGGDGKGKAPPQ. The helical transmembrane segment at 21 to 41 threads the bilayer; the sequence is ISLSGLFLACMVAGGVQYGWA. Residues 42 to 54 are Extracellular-facing; that stretch reads LQLSLLTPYVQTL. The helical transmembrane segment at 55–75 threads the bilayer; sequence GIPHALTSVMWLCGPIAGLIV. Over 76 to 94 the chain is Cytoplasmic; that stretch reads QPCVGLYSDKCTSSLGRRR. A helical transmembrane segment spans residues 95 to 115; sequence PFILTGCIIICISVIVIGFSS. Topologically, residues 116-135 are extracellular; that stretch reads DIGYALGDTTEDCKVYRGPR. The chain crosses the membrane as a helical span at residues 136-156; it reads YHAAAAFILGFWLLDFSNNTV. The Cytoplasmic segment spans residues 157 to 171; that stretch reads QGPARALMADLSGRH. The helical transmembrane segment at 172 to 192 threads the bilayer; that stretch reads GPSAANAIFCSWMALGNILGY. Residues 193–220 lie on the Extracellular side of the membrane; it reads SSGSTNDWHKWFPFLMTRACCEACANLK. The chain crosses the membrane as a helical span at residues 221 to 241; it reads AAFLVAVVFLGLSTAVTMVFA. Over 242 to 275 the chain is Cytoplasmic; the sequence is REVALDPVAAAKRNEGEASGLLAVFKGMKNLPVG. The chain crosses the membrane as a helical span at residues 276–296; that stretch reads MPSVLIVTGLTWLSWFPFILF. Residues 297–327 lie on the Extracellular side of the membrane; it reads DTDWMGREIYHGRPDGSPAEVTAFQEGVRQG. A helical membrane pass occupies residues 328–348; that stretch reads AFGLLLNSIVLGISSFLIEPM. Residues 349 to 355 are Cytoplasmic-facing; the sequence is CRRLGAR. The helical transmembrane segment at 356–376 threads the bilayer; sequence AVWVMSSAVVCVAMAAVSVLS. The Extracellular segment spans residues 377-404; that stretch reads AWSLGDFGGSVQDAARAPAEEGGVRASA. Residues 405 to 425 form a helical membrane-spanning segment; it reads LALFVFLGLPFAVLCSVPFAV. At 426-441 the chain is on the cytoplasmic side; that stretch reads TAQLAASRGGGQGLCT. Residues 442–462 traverse the membrane as a helical segment; the sequence is GVLNISIVVPQMAIALGAGPW. Topologically, residues 463-470 are extracellular; it reads DELFGEGN. A helical transmembrane segment spans residues 471–491; the sequence is IPAFAMASVFAAAAAAAGVVL. At 492 to 506 the chain is on the cytoplasmic side; that stretch reads LPKVSVRSVSMAGGH.

This sequence belongs to the glycoside-pentoside-hexuronide (GPH) cation symporter transporter (TC 2.A.2.4) family. Homodimer. As to expression, widely expressed. Highest expression in sink leaves and lowest in germinating seeds.

The protein resides in the cell membrane. Its pathway is glycan biosynthesis; sucrose metabolism. Functionally, responsible for the transport of sucrose into the cell, with the concomitant uptake of protons (symport system). May also transport other glucosides. The chain is Sucrose transport protein SUT3 (SUT3) from Oryza sativa subsp. japonica (Rice).